A 232-amino-acid chain; its full sequence is MGQKVNPIGLRLGINRNWESRWFPTKQSLPENIGEDYKIRAFLKKKLYYAGISQILIERTAKKLRVTVVAARPGIIIGKKGQDVENLKNEVSKLIGKEVNVNIKEERKAQASAQLAAENVAMQLEKRVAFRRAMKKVIQGAQKSGAKGIKISVAGRLGGAEMARTEWYLEGRVPLHTLRAKIDYGVAEAHTTYGNIGIKVWIFKGEVLQKGVQPEKTEEEAPKKTRRARRGK.

A KH type-2 domain is found at 39 to 107; sequence IRAFLKKKLY…EVNVNIKEER (69 aa). A disordered region spans residues 211 to 232; it reads GVQPEKTEEEAPKKTRRARRGK. Residues 213 to 223 show a composition bias toward basic and acidic residues; it reads QPEKTEEEAPK.

It belongs to the universal ribosomal protein uS3 family. In terms of assembly, part of the 30S ribosomal subunit. Forms a tight complex with proteins S10 and S14.

Its function is as follows. Binds the lower part of the 30S subunit head. Binds mRNA in the 70S ribosome, positioning it for translation. This is Small ribosomal subunit protein uS3 from Campylobacter concisus (strain 13826).